The following is a 104-amino-acid chain: Chromogranin-A (104 aa).

Cys-17 and Cys-38 are oxidised to a cystine.

It belongs to the chromogranin/secretogranin protein family. As to quaternary structure, dimer.

It localises to the cytoplasmic vesicle. The protein localises to the secretory vesicle. Its subcellular location is the secreted. In terms of biological role, chromogranin A probably has a paracrine role in the regulation of secretion or maturation. This chain is Chromogranin-A (CHGA), found in Struthio camelus (Common ostrich).